The following is a 408-amino-acid chain: Histidine--tRNA ligase (408 aa).

This sequence belongs to the class-II aminoacyl-tRNA synthetase family. Homodimer.

The protein localises to the cytoplasm. It carries out the reaction tRNA(His) + L-histidine + ATP = L-histidyl-tRNA(His) + AMP + diphosphate + H(+). The sequence is that of Histidine--tRNA ligase from Campylobacter concisus (strain 13826).